Consider the following 167-residue polypeptide: uncharacterized protein (167 aa).

This is an uncharacterized protein from Acidianus convivator (ATV).